The following is a 189-amino-acid chain: Ribosome maturation factor RimM (189 aa).

A PRC barrel domain is found at 113-189; it reads DGEYYWVDLL…TIVADWQPDY (77 aa).

Belongs to the RimM family. As to quaternary structure, binds ribosomal protein uS19.

It is found in the cytoplasm. An accessory protein needed during the final step in the assembly of 30S ribosomal subunit, possibly for assembly of the head region. Essential for efficient processing of 16S rRNA. May be needed both before and after RbfA during the maturation of 16S rRNA. It has affinity for free ribosomal 30S subunits but not for 70S ribosomes. The protein is Ribosome maturation factor RimM of Delftia acidovorans (strain DSM 14801 / SPH-1).